Here is a 306-residue protein sequence, read N- to C-terminus: Ribosomal RNA small subunit methyltransferase H (306 aa).

S-adenosyl-L-methionine is bound by residues 36–38 (GGH), Asp-56, Phe-80, Asp-97, and Gln-104. The tract at residues 280-306 (ASEEEVAGNPRSRSAVMRVAERTGEAA) is disordered.

This sequence belongs to the methyltransferase superfamily. RsmH family.

The protein localises to the cytoplasm. It catalyses the reaction cytidine(1402) in 16S rRNA + S-adenosyl-L-methionine = N(4)-methylcytidine(1402) in 16S rRNA + S-adenosyl-L-homocysteine + H(+). Specifically methylates the N4 position of cytidine in position 1402 (C1402) of 16S rRNA. The sequence is that of Ribosomal RNA small subunit methyltransferase H from Polaromonas naphthalenivorans (strain CJ2).